The following is a 501-amino-acid chain: Cytochrome P450 7A1 (501 aa).

A helical transmembrane segment spans residues 4-24 (IFWIWGICLSVCCCLWLILGL). C441 is a heme binding site.

This sequence belongs to the cytochrome P450 family. Heme is required as a cofactor. In terms of tissue distribution, detected in liver.

It is found in the endoplasmic reticulum membrane. Its subcellular location is the microsome membrane. The catalysed reaction is cholesterol + reduced [NADPH--hemoprotein reductase] + O2 = 7alpha-hydroxycholesterol + oxidized [NADPH--hemoprotein reductase] + H2O + H(+). The enzyme catalyses 4beta-hydroxycholesterol + reduced [NADPH--hemoprotein reductase] + O2 = 4beta,7alpha-dihydroxycholesterol + oxidized [NADPH--hemoprotein reductase] + H2O + H(+). It carries out the reaction lathosterol + reduced [NADPH--hemoprotein reductase] + O2 = 7alpha,8alpha-epoxy-5alpha-cholestan-3beta-ol + oxidized [NADPH--hemoprotein reductase] + H2O + H(+). It catalyses the reaction lathosterol + reduced [NADPH--hemoprotein reductase] + O2 = 5alpha-cholestan-7-oxo-3beta-ol + oxidized [NADPH--hemoprotein reductase] + H2O + H(+). The catalysed reaction is 7-dehydrocholesterol + reduced [NADPH--hemoprotein reductase] + O2 = 7-oxocholesterol + oxidized [NADPH--hemoprotein reductase] + H2O + H(+). The enzyme catalyses (24S)-hydroxycholesterol + reduced [NADPH--hemoprotein reductase] + O2 = (24S)-7alpha-dihydroxycholesterol + oxidized [NADPH--hemoprotein reductase] + H2O + H(+). It carries out the reaction (24R)-hydroxycholesterol + reduced [NADPH--hemoprotein reductase] + O2 = (24R)-7alpha-dihydroxycholesterol + oxidized [NADPH--hemoprotein reductase] + H2O + H(+). Its pathway is lipid metabolism; bile acid biosynthesis. The protein operates within steroid metabolism; cholesterol degradation. Functionally, a cytochrome P450 monooxygenase involved in the metabolism of endogenous cholesterol and its oxygenated derivatives (oxysterols). Mechanistically, uses molecular oxygen inserting one oxygen atom into a substrate, and reducing the second into a water molecule, with two electrons provided by NADPH via cytochrome P450 reductase (CPR; NADPH-ferrihemoprotein reductase). Functions as a critical regulatory enzyme of bile acid biosynthesis and cholesterol homeostasis. Catalyzes the hydroxylation of carbon hydrogen bond at 7-alpha position of cholesterol, a rate-limiting step in cholesterol catabolism and bile acid biosynthesis. 7-alpha hydroxylates several oxysterols, including 4beta-hydroxycholesterol and 24-hydroxycholesterol. Catalyzes the oxidation of the 7,8 double bond of 7-dehydrocholesterol and lathosterol with direct and predominant formation of the 7-keto derivatives. The polypeptide is Cytochrome P450 7A1 (CYP7A1) (Oryctolagus cuniculus (Rabbit)).